The chain runs to 66 residues: DNA-directed RNA polymerase subunit Rpo10 (66 aa).

Residues C7, C10, C44, and C45 each coordinate Zn(2+).

This sequence belongs to the archaeal Rpo10/eukaryotic RPB10 RNA polymerase subunit family. In terms of assembly, part of the RNA polymerase complex. Zn(2+) is required as a cofactor.

It localises to the cytoplasm. It catalyses the reaction RNA(n) + a ribonucleoside 5'-triphosphate = RNA(n+1) + diphosphate. Its function is as follows. DNA-dependent RNA polymerase (RNAP) catalyzes the transcription of DNA into RNA using the four ribonucleoside triphosphates as substrates. This Sulfurisphaera tokodaii (strain DSM 16993 / JCM 10545 / NBRC 100140 / 7) (Sulfolobus tokodaii) protein is DNA-directed RNA polymerase subunit Rpo10.